We begin with the raw amino-acid sequence, 312 residues long: L-lactate dehydrogenase (312 aa).

Residues valine 14, aspartate 35, and tyrosine 66 each coordinate NAD(+). Glutamine 83 and arginine 90 together coordinate substrate. NAD(+) contacts are provided by residues serine 103, 120–122, and serine 145; that span reads ASN. 122–125 provides a ligand contact to substrate; the sequence is NPVD. Residue 150–153 participates in substrate binding; that stretch reads DSAR. The Proton acceptor role is filled by histidine 177. Residue tyrosine 220 is modified to Phosphotyrosine. Threonine 229 serves as a coordination point for substrate.

The protein belongs to the LDH/MDH superfamily. LDH family. As to quaternary structure, homotetramer.

It localises to the cytoplasm. It catalyses the reaction (S)-lactate + NAD(+) = pyruvate + NADH + H(+). It functions in the pathway fermentation; pyruvate fermentation to lactate; (S)-lactate from pyruvate: step 1/1. Functionally, catalyzes the conversion of lactate to pyruvate. This chain is L-lactate dehydrogenase, found in Mycoplasma genitalium (strain ATCC 33530 / DSM 19775 / NCTC 10195 / G37) (Mycoplasmoides genitalium).